The sequence spans 260 residues: Dolichol-phosphate mannosyltransferase subunit 1 (260 aa).

Position 2 is an N-acetylalanine (Ala2). Ser3 and Ser9 each carry phosphoserine. Residues Pro32, Tyr34, Glu36, Ile63, Asp65, Asp118, Ala119, Asp120, Arg147, Arg234, and Lys240 each coordinate GDP-alpha-D-mannose. Asp120 contributes to the Mg(2+) binding site. Asp120 provides a ligand contact to Mn(2+).

This sequence belongs to the glycosyltransferase 2 family. In terms of assembly, component of the dolichol-phosphate mannose (DPM) synthase complex composed of DPM1, DPM2 and DPM3; within the complex, directly interacts with DPM3. This interaction stabilizes DPM1. The cofactor is Mg(2+). Mn(2+) serves as cofactor. Requires Ca(2+) as cofactor.

The protein resides in the endoplasmic reticulum. The catalysed reaction is a di-trans,poly-cis-dolichyl phosphate + GDP-alpha-D-mannose = a di-trans,poly-cis-dolichyl beta-D-mannosyl phosphate + GDP. The protein operates within protein modification; protein glycosylation. Its function is as follows. Transfers mannose from GDP-mannose to dolichol monophosphate to form dolichol phosphate mannose (Dol-P-Man) which is the mannosyl donor in pathways leading to N-glycosylation, glycosyl phosphatidylinositol membrane anchoring, and O-mannosylation of proteins; catalytic subunit of the dolichol-phosphate mannose (DPM) synthase complex. The sequence is that of Dolichol-phosphate mannosyltransferase subunit 1 (DPM1) from Homo sapiens (Human).